Reading from the N-terminus, the 462-residue chain is Elongation factor 1-alpha, somatic form (462 aa).

N,N,N-trimethylglycine is present on glycine 2. In terms of domain architecture, tr-type G spans 5–242 (KTHINIVVIG…DCILPPSRPT (238 aa)). A G1 region spans residues 14-21 (GHVDSGKS). A GTP-binding site is contributed by 14–21 (GHVDSGKS). A G2 region spans residues 70–74 (GITID). The segment at 91 to 94 (DAPG) is G3. Residues 91 to 95 (DAPGH) and 153 to 156 (NKMD) contribute to the GTP site. The tract at residues 153–156 (NKMD) is G4. A G5 region spans residues 194–196 (SGW). 2 positions are modified to 5-glutamyl glycerylphosphorylethanolamine: glutamate 301 and glutamate 374.

Belongs to the TRAFAC class translation factor GTPase superfamily. Classic translation factor GTPase family. EF-Tu/EF-1A subfamily.

Its subcellular location is the cytoplasm. Functionally, this protein promotes the GTP-dependent binding of aminoacyl-tRNA to the A-site of ribosomes during protein biosynthesis. The sequence is that of Elongation factor 1-alpha, somatic form (eef1as) from Xenopus laevis (African clawed frog).